The following is a 1071-amino-acid chain: MKLIYTEMSYSMTEILVNEARKAADQGYRVFYIAPNSLSFEKEREVLTLLPERGTFSIIVTRFVQMSRYFTVESSPSKQHLDDTTLAMIFYRALMQLKPEDLPSYGRLQNNSVFIEQLVELYKELKNAQLSVHDLTGLDHPQKQEDLIKIIELAETIMIQQDYNQDSPLQSFARAIKLGLLNNQLSKTVVVIDGFSRFSAEEDYLLSLLNNNCQEVIIGSYVSQKAYQKSFIKGNIYEASLHFLQDLAQKYHIKPVFATSNQVFKPAFSRLTQLFEATHDFSQVDWQLQKNDLDHFSLWQCHHQKEEIEHVAKSIRQKLYEGYRYKDILVLLGDMDAYQLQIGPIFDKFEIPYYLGKAEPMAAHPLVQFIESLERSQRYNWRREDILNMLKSGLFGCFDDSDIDRFEEYTQFADIKGFTKFSKPFTINSSRQYPLDFLNEMRQDIVLPLQELFKSQKQLGASLVDKLILFLKKIRLAENMQGLAQSQLEVEKNEEVWKRFTDILTSFHHIFGQEKLRLSDCLALIKTGMKSAQYRVVPATLDVVTIKSYDLVQPHSKPFVYAIGLTQSHFPKQIHHSGLLSDQERARINEIRNYRHFDIASAENSKKNHQTALSLFNAATKELVLSVPTVINETFDDLSPYLKELINFGLPLLDKGKNYLSYDNSDIGNYKALLSQIIAINRQDLIEMSDQDKMFWTVVLRYLRKQLRKQQLELPTSDYRLSTKPLSKEVIEVCFPKGIPLKLSATALTVFYNNQYNYFLKYVLNLNKTESIHPDSRIHGQYLHRVFERLMKDHTQEPFDNKLKQAIYHTNQESFFQQVYQDNAEAEYSLAILEDIVRSTAPILQLNQNIKVIDQEKNFHLDMGNEILVHGIIDRIDQLSDGSLGVVDYKSSANQFDIGTFYNGLSPQLVTYLAALKQIAPHDINQLFGAMYLHLQDPKLDLVTFKQIDNTLVESIYKALTYKGIFSEVEKEHLSTGAYQTKNALYSNDELETLLNYNKYLYLKAVKHIKKGHFLINPYTSDGKTVQGDQLKAITRFEADLDMAQARRLVTLPAKEKKECFLTLMRKESHL.

Belongs to the helicase family. AddB/RexB type 2 subfamily. Heterodimer of AddA and RexB. The cofactor is Mg(2+).

Its function is as follows. The heterodimer acts as both an ATP-dependent DNA helicase and an ATP-dependent, dual-direction single-stranded exonuclease. Recognizes the chi site generating a DNA molecule suitable for the initiation of homologous recombination. This subunit has 5' -&gt; 3' nuclease activity but not helicase activity. The sequence is that of ATP-dependent helicase/deoxyribonuclease subunit B from Streptococcus pyogenes serotype M18 (strain MGAS8232).